The primary structure comprises 459 residues: Serine protease HTRA3 (459 aa).

The signal sequence occupies residues 1 to 23; that stretch reads MQARALLPATLATLATLAVSVLA. The 64-residue stretch at 27-90 folds into the IGFBP N-terminal domain; it reads PAAPCPARCD…ECVRGVCRCR (64 aa). 8 disulfides stabilise this stretch: Cys31–Cys54, Cys35–Cys56, Cys40–Cys57, Cys45–Cys60, Cys68–Cys82, Cys76–Cys87, Cys89–Cys107, and Cys96–Cys132. The Kazal-like domain occupies 76–134; it reads CGDSLECVRGVCRCRWTHTVCGTDGHTYADVCALQAASRRALQISGTPVRQLQKGACPS. Residues 181–346 form a serine protease region; sequence GSGFIMSEAG…AIPSDRITRF (166 aa). Catalysis depends on charge relay system residues His197, Asp233, and Ser311. Residues 365–450 enclose the PDZ domain; that stretch reads IRMRTITPSL…EVRRGNDDLL (86 aa).

The protein belongs to the peptidase S1C family. As to quaternary structure, homotrimer. Interacts with TGFB1; the interaction inhibits TGFB-mediated signaling. Interacts with BMP4; the interaction inhibits BMP4-mediated signaling. Interacts with TGFB2, GDF5 and MYH9. Expressed in the ovary, essentially in granulosa cells in a follicle-stage specific manner. Highest levels found in large luteinizing granulosa cells.

The protein localises to the secreted. Its function is as follows. Serine protease that cleaves beta-casein/CSN2 as well as several extracellular matrix (ECM) proteoglycans such as decorin/DCN, biglycan/BGN and fibronectin/FN1. Inhibits signaling mediated by TGF-beta family proteins possibly indirectly by degradation of these ECM proteoglycans. May act as a tumor suppressor. Negatively regulates, in vitro, trophoblast invasion during placental development and may be involved in the development of the placenta in vivo. May also have a role in ovarian development, granulosa cell differentiation and luteinization. In Rattus norvegicus (Rat), this protein is Serine protease HTRA3 (Htra3).